A 319-amino-acid chain; its full sequence is Large ribosomal subunit protein uL29m (319 aa).

Residues 1–55 (MWKRSFHSQGGPLRARTKFTKPKPKQPVLPKDKIRPPTQLTHHSNNLRITEPIPP) are disordered. Basic residues predominate over residues 15-24 (ARTKFTKPKP). Positions 38–48 (TQLTHHSNNLR) are enriched in polar residues.

The protein belongs to the universal ribosomal protein uL29 family. Component of the mitochondrial large ribosomal subunit. Mature mitochondrial ribosomes consist of a small (37S) and a large (54S) subunit. The 37S subunit contains at least 33 different proteins and 1 molecule of RNA (15S). The 54S subunit contains at least 45 different proteins and 1 molecule of RNA (21S).

Its subcellular location is the mitochondrion. The polypeptide is Large ribosomal subunit protein uL29m (MRPL4) (Saccharomyces cerevisiae (strain YJM789) (Baker's yeast)).